The following is a 150-amino-acid chain: Cyanate hydratase (150 aa).

Catalysis depends on residues Arg-91, Glu-94, and Ser-117.

The protein belongs to the cyanase family.

The catalysed reaction is cyanate + hydrogencarbonate + 3 H(+) = NH4(+) + 2 CO2. In terms of biological role, catalyzes the reaction of cyanate with bicarbonate to produce ammonia and carbon dioxide. The sequence is that of Cyanate hydratase from Synechococcus sp. (strain CC9311).